A 316-amino-acid chain; its full sequence is Spermidine synthase (316 aa).

The 238-residue stretch at 25–262 (PGWFSEISPM…GVIGFMLCST (238 aa)) folds into the PABS domain. Position 56 (Gln-56) interacts with S-adenosyl 3-(methylsulfanyl)propylamine. Residue Tyr-86 coordinates putrescine. S-adenosyl 3-(methylsulfanyl)propylamine-binding positions include Gln-87, Asp-111, Glu-131, 162–163 (DG), and Asp-181. The active-site Proton acceptor is the Asp-181. Residues 181–184 (DSSD) and Tyr-250 each bind putrescine.

This sequence belongs to the spermidine/spermine synthase family.

It carries out the reaction S-adenosyl 3-(methylsulfanyl)propylamine + putrescine = S-methyl-5'-thioadenosine + spermidine + H(+). It participates in amine and polyamine biosynthesis; spermidine biosynthesis; spermidine from putrescine: step 1/1. The protein is Spermidine synthase of Coffea arabica (Arabian coffee).